Here is a 275-residue protein sequence, read N- to C-terminus: Digeranylgeranylglyceryl phosphate synthase (275 aa).

Transmembrane regions (helical) follow at residues 12–32 (VHNV…ATTW), 35–55 (TPLF…GYVI), 88–108 (IVLF…PFGF), 125–145 (KLGL…AYYG), 146–166 (GLAS…IFFF), 200–220 (WIIA…PYFL), 224–244 (VIYL…LILH), and 255–275 (SLMK…SLRI).

This sequence belongs to the UbiA prenyltransferase family. DGGGP synthase subfamily. Requires Mg(2+) as cofactor.

The protein resides in the cell membrane. It carries out the reaction sn-3-O-(geranylgeranyl)glycerol 1-phosphate + (2E,6E,10E)-geranylgeranyl diphosphate = 2,3-bis-O-(geranylgeranyl)-sn-glycerol 1-phosphate + diphosphate. It participates in membrane lipid metabolism; glycerophospholipid metabolism. Prenyltransferase that catalyzes the transfer of the geranylgeranyl moiety of geranylgeranyl diphosphate (GGPP) to the C2 hydroxyl of (S)-3-O-geranylgeranylglyceryl phosphate (GGGP). This reaction is the second ether-bond-formation step in the biosynthesis of archaeal membrane lipids. The protein is Digeranylgeranylglyceryl phosphate synthase of Sulfolobus acidocaldarius (strain ATCC 33909 / DSM 639 / JCM 8929 / NBRC 15157 / NCIMB 11770).